A 389-amino-acid chain; its full sequence is 23S rRNA (uracil(747)-C(5))-methyltransferase RlmC (389 aa).

[4Fe-4S] cluster contacts are provided by C12, C20, C23, and C99. The S-adenosyl-L-methionine site is built by Q224, F253, E274, and N321. Catalysis depends on C348, which acts as the Nucleophile.

It belongs to the class I-like SAM-binding methyltransferase superfamily. RNA M5U methyltransferase family. RlmC subfamily.

It carries out the reaction uridine(747) in 23S rRNA + S-adenosyl-L-methionine = 5-methyluridine(747) in 23S rRNA + S-adenosyl-L-homocysteine + H(+). In terms of biological role, catalyzes the formation of 5-methyl-uridine at position 747 (m5U747) in 23S rRNA. The polypeptide is 23S rRNA (uracil(747)-C(5))-methyltransferase RlmC (Shewanella putrefaciens (strain CN-32 / ATCC BAA-453)).